The primary structure comprises 552 residues: Antibiotic resistance protein MAB_2355c (552 aa).

2 ABC transporter domains span residues 4–270 (VQLD…RRWD) and 332–552 (AKRA…PQWV). ATP is bound by residues 37 to 44 (GPNGTGKT) and 364 to 371 (GGNGTGKS).

Belongs to the ABC transporter superfamily. ABCF family.

The catalysed reaction is ATP + H2O = ADP + phosphate + H(+). The ATPase activity can be inhibited by ribosome-targeting antibiotics. In terms of biological role, exhibits ATP hydrolysis activity and contributes to macrolide resistance by ribosome protection. Can also hydrolyze GTP, TTP and CTP but to a lesser extent than ATP. In vitro, rescues the transcription and translation activities affected by macrolides. Increased expression correlates with increased resistance to clarithromycin, one of the main drugs used to treat M.abscessus. This is Antibiotic resistance protein MAB_2355c from Mycobacteroides abscessus (strain ATCC 19977 / DSM 44196 / CCUG 20993 / CIP 104536 / JCM 13569 / NCTC 13031 / TMC 1543 / L948) (Mycobacterium abscessus).